A 485-amino-acid polypeptide reads, in one-letter code: ATP synthase subunit beta (485 aa).

The interval methionine 1–glycine 20 is disordered. Glycine 170–threonine 177 is a binding site for ATP.

The protein belongs to the ATPase alpha/beta chains family. As to quaternary structure, F-type ATPases have 2 components, CF(1) - the catalytic core - and CF(0) - the membrane proton channel. CF(1) has five subunits: alpha(3), beta(3), gamma(1), delta(1), epsilon(1). CF(0) has three main subunits: a(1), b(2) and c(9-12). The alpha and beta chains form an alternating ring which encloses part of the gamma chain. CF(1) is attached to CF(0) by a central stalk formed by the gamma and epsilon chains, while a peripheral stalk is formed by the delta and b chains.

It is found in the cell membrane. It catalyses the reaction ATP + H2O + 4 H(+)(in) = ADP + phosphate + 5 H(+)(out). Produces ATP from ADP in the presence of a proton gradient across the membrane. The catalytic sites are hosted primarily by the beta subunits. In Mycobacterium leprae (strain TN), this protein is ATP synthase subunit beta.